A 127-amino-acid polypeptide reads, in one-letter code: Glycine cleavage system H protein (127 aa).

In terms of domain architecture, Lipoyl-binding spans 22-104 (EVVIGITHFA…YEGAWMVKVE (83 aa)). Lys63 carries the N6-lipoyllysine modification.

It belongs to the GcvH family. In terms of assembly, the glycine cleavage system is composed of four proteins: P, T, L and H. (R)-lipoate serves as cofactor.

Its function is as follows. The glycine cleavage system catalyzes the degradation of glycine. The H protein shuttles the methylamine group of glycine from the P protein to the T protein. Is also involved in protein lipoylation via its role as an octanoyl/lipoyl carrier protein intermediate. The sequence is that of Glycine cleavage system H protein from Bacillus cereus (strain B4264).